We begin with the raw amino-acid sequence, 146 residues long: Small ribosomal subunit protein eS17 (146 aa).

This sequence belongs to the eukaryotic ribosomal protein eS17 family. As to quaternary structure, component of the small ribosomal subunit (SSU). Mature N.crassa ribosomes consist of a small (40S) and a large (60S) subunit. The 40S small subunit contains 1 molecule of ribosomal RNA (18S rRNA) and at least 32 different proteins. The large 60S subunit contains 3 rRNA molecules (26S, 5.8S and 5S rRNA) and at least 42 different proteins.

Its subcellular location is the cytoplasm. Component of the ribosome, a large ribonucleoprotein complex responsible for the synthesis of proteins in the cell. The small ribosomal subunit (SSU) binds messenger RNAs (mRNAs) and translates the encoded message by selecting cognate aminoacyl-transfer RNA (tRNA) molecules. The large subunit (LSU) contains the ribosomal catalytic site termed the peptidyl transferase center (PTC), which catalyzes the formation of peptide bonds, thereby polymerizing the amino acids delivered by tRNAs into a polypeptide chain. The nascent polypeptides leave the ribosome through a tunnel in the LSU and interact with protein factors that function in enzymatic processing, targeting, and the membrane insertion of nascent chains at the exit of the ribosomal tunnel. In Neurospora crassa (strain ATCC 24698 / 74-OR23-1A / CBS 708.71 / DSM 1257 / FGSC 987), this protein is Small ribosomal subunit protein eS17 (rps-17).